A 187-amino-acid polypeptide reads, in one-letter code: Shikimate kinase (187 aa).

19–24 (GSGKST) lines the ATP pocket. Mg(2+) is bound at residue Ser23. Residues Asp41, Arg65, and Gly87 each contribute to the substrate site. Arg124 is a binding site for ATP. A substrate-binding site is contributed by Arg143. An ATP-binding site is contributed by Arg160.

It belongs to the shikimate kinase family. Monomer. The cofactor is Mg(2+).

It localises to the cytoplasm. The catalysed reaction is shikimate + ATP = 3-phosphoshikimate + ADP + H(+). Its pathway is metabolic intermediate biosynthesis; chorismate biosynthesis; chorismate from D-erythrose 4-phosphate and phosphoenolpyruvate: step 5/7. Catalyzes the specific phosphorylation of the 3-hydroxyl group of shikimic acid using ATP as a cosubstrate. The chain is Shikimate kinase from Rippkaea orientalis (strain PCC 8801 / RF-1) (Cyanothece sp. (strain PCC 8801)).